A 464-amino-acid polypeptide reads, in one-letter code: Endo-1,4-beta-xylanase A (464 aa).

Residues 1–33 form the signal peptide; sequence MFRHHPTRGRRTAGLLAAALATLSAGLTAVAPA. A GH10 domain is found at 40 to 349; sequence TATLGELAEA…KPAYHAIAAA (310 aa). Glu166 (proton donor) is an active-site residue. Residue Glu271 is the Nucleophile of the active site. The 104-residue stretch at 354–457 folds into the CBM2 domain; it reads SPAPGGNCTA…TPADVTCTPG (104 aa).

This sequence belongs to the glycosyl hydrolase 10 (cellulase F) family. Requires Does not require any standard metal (Mg(2+), Mn2(+), Ca(2+)). as cofactor.

The enzyme catalyses Endohydrolysis of (1-&gt;4)-beta-D-xylosidic linkages in xylans.. The protein operates within glycan degradation; xylan degradation. With respect to regulation, completely inhibited by Hg(2+), unaffected by EDTA. Its function is as follows. Contributes to hydrolysis of hemicellulose, the major component of plant cell-walls. Hydrolyzes xylan to xylose and xylobiose. The chain is Endo-1,4-beta-xylanase A (xynAS9) from Streptomyces sp.